The sequence spans 299 residues: Acetylglutamate kinase (299 aa).

Residues 70 to 71 (GG), arginine 92, and asparagine 186 each bind substrate.

The protein belongs to the acetylglutamate kinase family. ArgB subfamily.

The protein localises to the cytoplasm. It catalyses the reaction N-acetyl-L-glutamate + ATP = N-acetyl-L-glutamyl 5-phosphate + ADP. Its pathway is amino-acid biosynthesis; L-arginine biosynthesis; N(2)-acetyl-L-ornithine from L-glutamate: step 2/4. Functionally, catalyzes the ATP-dependent phosphorylation of N-acetyl-L-glutamate. The polypeptide is Acetylglutamate kinase (Thermoanaerobacter sp. (strain X514)).